Reading from the N-terminus, the 750-residue chain is Glutathione biosynthesis bifunctional protein GshAB (750 aa).

The glutamate--cysteine ligase stretch occupies residues 1-333 (MIIDRLLQRS…EANRLNDLIA (333 aa)). Residues 32–51 (QPTQRVAQTPHPKTLGSRNY) are disordered. The ATP-grasp domain occupies 489-747 (KKILDEKHFP…ITPRILAKLF (259 aa)). 516-574 (SQIQDKPIVVKPKSTNFGLGISIFKTSANLASYEKAIDIAFTEDSAILVEEYIEGTEYR) contributes to the ATP binding site. The Mg(2+) site is built by aspartate 696, glutamate 717, and asparagine 719. Mn(2+) contacts are provided by aspartate 696, glutamate 717, and asparagine 719.

In the N-terminal section; belongs to the glutamate--cysteine ligase type 1 family. Type 2 subfamily. Monomer. It depends on Mg(2+) as a cofactor. Mn(2+) is required as a cofactor.

It catalyses the reaction L-cysteine + L-glutamate + ATP = gamma-L-glutamyl-L-cysteine + ADP + phosphate + H(+). It carries out the reaction gamma-L-glutamyl-L-cysteine + glycine + ATP = glutathione + ADP + phosphate + H(+). The protein operates within sulfur metabolism; glutathione biosynthesis; glutathione from L-cysteine and L-glutamate: step 1/2. It participates in sulfur metabolism; glutathione biosynthesis; glutathione from L-cysteine and L-glutamate: step 2/2. Functionally, synthesizes glutathione from L-glutamate and L-cysteine via gamma-L-glutamyl-L-cysteine. The chain is Glutathione biosynthesis bifunctional protein GshAB from Streptococcus agalactiae serotype III (strain NEM316).